The sequence spans 379 residues: tRNA-specific 2-thiouridylase MnmA (379 aa).

ATP-binding positions include 23–30 and Leu49; that span reads AMSGGVDS. Cys117 (nucleophile) is an active-site residue. Cys117 and Cys214 form a disulfide bridge. Gly141 lines the ATP pocket. Positions 163 to 165 are interaction with tRNA; sequence RDQ. Cys214 acts as the Cysteine persulfide intermediate in catalysis.

Belongs to the MnmA/TRMU family.

It is found in the cytoplasm. It carries out the reaction S-sulfanyl-L-cysteinyl-[protein] + uridine(34) in tRNA + AH2 + ATP = 2-thiouridine(34) in tRNA + L-cysteinyl-[protein] + A + AMP + diphosphate + H(+). Its function is as follows. Catalyzes the 2-thiolation of uridine at the wobble position (U34) of tRNA, leading to the formation of s(2)U34. The chain is tRNA-specific 2-thiouridylase MnmA from Cereibacter sphaeroides (strain KD131 / KCTC 12085) (Rhodobacter sphaeroides).